Reading from the N-terminus, the 407-residue chain is Probable NADPH dehydrogenase (407 aa).

2 residues coordinate FMN: threonine 49 and glutamine 124. A substrate-binding site is contributed by 201 to 204 (HGAH). Tyrosine 206 acts as the Proton donor in catalysis. FMN-binding residues include arginine 254 and arginine 357.

It belongs to the NADH:flavin oxidoreductase/NADH oxidase family. It depends on FMN as a cofactor.

The enzyme catalyses A + NADPH + H(+) = AH2 + NADP(+). Its function is as follows. Oxidoreductase that binds mammalian estrogens with high affinity. The chain is Probable NADPH dehydrogenase from Candida albicans (Yeast).